Consider the following 271-residue polypeptide: Protein PXR1 (271 aa).

The G-patch domain maps to 25–72 (TSRFGHQFLEKFGWKPGMGLGLYPMNSNTSHIKVSIKDDNVGLGAKLK). The interval 147 to 239 (SNAKKRKREG…SASNIPDAVN (93 aa)) is disordered. Residues 157–168 (DDSEDEDDDDKE) show a composition bias toward acidic residues. Over residues 175-203 (KKHKKHKKHKKDKKKDKKDKKEHKKHKKE) the composition is skewed to basic residues. Over residues 204–221 (EKRLKKEKRAEKTKETKK) the composition is skewed to basic and acidic residues. S230 bears the Phosphoserine mark.

Belongs to the PINX1 family. As to quaternary structure, interacts with EST2.

The protein resides in the nucleus. It localises to the nucleolus. In terms of biological role, involved in rRNA-processing at A0, A1 and A2 sites through its action in U18 and U24 snoRNA 3'-end final trimming. Negative regulator of telomerase throughX competition for binding to EST2 with TLC1. The chain is Protein PXR1 (PXR1) from Saccharomyces cerevisiae (strain YJM789) (Baker's yeast).